We begin with the raw amino-acid sequence, 296 residues long: Protoheme IX farnesyltransferase 1 (296 aa).

The next 8 membrane-spanning stretches (helical) occupy residues 14–34, 41–61, 86–106, 108–128, 141–161, 165–185, 230–250, and 274–294; these read IVLLLVITAVTTMYAGDALSA, LWDYAHLMAAGALASAGSSAL, IGENIVLAYGLAISSAAVVYA, FLLNAPTAFFIALGIFSYVII, IVIGGIAGSAASWAGWTAATG, LLGFLIGFLVFVWTPSHFWCL, AFGMGLVYLVIAVASGGLMLV, and YLTIIFAAVALDAAFHYPFPF.

Belongs to the UbiA prenyltransferase family. Protoheme IX farnesyltransferase subfamily.

Its subcellular location is the cell membrane. It catalyses the reaction heme b + (2E,6E)-farnesyl diphosphate + H2O = Fe(II)-heme o + diphosphate. It participates in porphyrin-containing compound metabolism; heme O biosynthesis; heme O from protoheme: step 1/1. Converts heme B (protoheme IX) to heme O by substitution of the vinyl group on carbon 2 of heme B porphyrin ring with a hydroxyethyl farnesyl side group. The protein is Protoheme IX farnesyltransferase 1 of Cenarchaeum symbiosum (strain A).